Reading from the N-terminus, the 207-residue chain is Small ribosomal subunit protein uS4 (207 aa).

A disordered region spans residues 31–55 (KCKLDSKPGQHGRTSGARTSDYGTQ). The span at 42–53 (GRTSGARTSDYG) shows a compositional bias: polar residues. In terms of domain architecture, S4 RNA-binding spans 97-160 (SRLDNVVYRM…KKQARIVEAL (64 aa)).

Belongs to the universal ribosomal protein uS4 family. Part of the 30S ribosomal subunit. Contacts protein S5. The interaction surface between S4 and S5 is involved in control of translational fidelity.

One of the primary rRNA binding proteins, it binds directly to 16S rRNA where it nucleates assembly of the body of the 30S subunit. Functionally, with S5 and S12 plays an important role in translational accuracy. The sequence is that of Small ribosomal subunit protein uS4 from Burkholderia ambifaria (strain MC40-6).